Consider the following 106-residue polypeptide: Ig kappa-b4 chain C region (106 aa).

One can recognise an Ig-like domain in the interval 6–99 (PSVLLFPPSK…VQGSASPIVQ (94 aa)). A disulfide bridge connects residues Cys27 and Cys87. The span at 48–64 (QQSGIENSKTPQSPEDN) shows a compositional bias: polar residues. The tract at residues 48–67 (QQSGIENSKTPQSPEDNTYS) is disordered.

The chain is Ig kappa-b4 chain C region (K-BAS) from Oryctolagus cuniculus (Rabbit).